A 159-amino-acid polypeptide reads, in one-letter code: Ribosomal RNA large subunit methyltransferase H (159 aa).

Residues leucine 76, glycine 108, and 127–132 contribute to the S-adenosyl-L-methionine site; that span reads FSKMTF.

The protein belongs to the RNA methyltransferase RlmH family. As to quaternary structure, homodimer.

Its subcellular location is the cytoplasm. It carries out the reaction pseudouridine(1915) in 23S rRNA + S-adenosyl-L-methionine = N(3)-methylpseudouridine(1915) in 23S rRNA + S-adenosyl-L-homocysteine + H(+). In terms of biological role, specifically methylates the pseudouridine at position 1915 (m3Psi1915) in 23S rRNA. The chain is Ribosomal RNA large subunit methyltransferase H from Exiguobacterium sibiricum (strain DSM 17290 / CCUG 55495 / CIP 109462 / JCM 13490 / 255-15).